The primary structure comprises 163 residues: Neurotrophin-3 (163 aa).

The first 3 residues, 1–3 (IQS), serve as a signal peptide directing secretion. Residues 4 to 119 (SSMDQGILTE…VLNRTSRRKR (116 aa)) constitute a propeptide that is removed on maturation. The tract at residues 36 to 61 (QTARTKDGMQTTVKKTEAEADARASQ) is disordered. The segment covering 49 to 61 (KKTEAEADARASQ) has biased composition (basic and acidic residues). The N-linked (GlcNAc...) asparagine glycan is linked to N112.

Belongs to the NGF-beta family.

The protein resides in the secreted. Functionally, seems to promote the survival of visceral and proprioceptive sensory neurons. The sequence is that of Neurotrophin-3 (NTF3) from Boa constrictor (Boa).